Here is a 327-residue protein sequence, read N- to C-terminus: Putative cyclin-dependent kinase F-2 (327 aa).

A Protein kinase domain is found at 4–295 (YECLGKIGEG…AADALRCAWF (292 aa)). ATP contacts are provided by residues 10 to 18 (IGEGAAGVV) and Lys33. The active-site Proton acceptor is Asp134. Thr167 carries the post-translational modification Phosphothreonine.

It belongs to the protein kinase superfamily. CMGC Ser/Thr protein kinase family. CDC2/CDKX subfamily.

The enzyme catalyses L-seryl-[protein] + ATP = O-phospho-L-seryl-[protein] + ADP + H(+). The catalysed reaction is L-threonyl-[protein] + ATP = O-phospho-L-threonyl-[protein] + ADP + H(+). It carries out the reaction [DNA-directed RNA polymerase] + ATP = phospho-[DNA-directed RNA polymerase] + ADP + H(+). The chain is Putative cyclin-dependent kinase F-2 (CDKF-2) from Oryza sativa subsp. japonica (Rice).